The chain runs to 122 residues: Large ribosomal subunit protein uL14 (122 aa).

It belongs to the universal ribosomal protein uL14 family. As to quaternary structure, part of the 50S ribosomal subunit. Forms a cluster with proteins L3 and L19. In the 70S ribosome, L14 and L19 interact and together make contacts with the 16S rRNA in bridges B5 and B8.

Binds to 23S rRNA. Forms part of two intersubunit bridges in the 70S ribosome. This chain is Large ribosomal subunit protein uL14, found in Chlamydia abortus (strain DSM 27085 / S26/3) (Chlamydophila abortus).